The chain runs to 247 residues: Probable proteasome subunit alpha type-5 (247 aa).

Thr55 is subject to Phosphothreonine.

This sequence belongs to the peptidase T1A family. As to quaternary structure, the 26S proteasome consists of a 20S proteasome core and two 19S regulatory subunits. The 20S proteasome core is composed of 28 subunits that are arranged in four stacked rings, resulting in a barrel-shaped structure. The two end rings are each formed by seven alpha subunits, and the two central rings are each formed by seven beta subunits. The catalytic chamber with the active sites is on the inside of the barrel.

Its subcellular location is the cytoplasm. It localises to the nucleus. Its function is as follows. The proteasome is a multicatalytic proteinase complex which is characterized by its ability to cleave peptides with Arg, Phe, Tyr, Leu, and Glu adjacent to the leaving group at neutral or slightly basic pH. The proteasome has an ATP-dependent proteolytic activity. This Schizosaccharomyces pombe (strain 972 / ATCC 24843) (Fission yeast) protein is Probable proteasome subunit alpha type-5 (pup2).